The chain runs to 495 residues: Non-structural protein 1 (495 aa).

The segment at 1 to 81 (MATFKDACFH…CFLDNEPHLL (81 aa)) is RNA-binding. Residues 42-79 (CLECCQIADLTHCYGCSLPHVCKWCVQNRRCFLDNEPH) are zinc-binding domain. Positions 82–177 (KLQQLKHPIT…DIYAPYRIVN (96 aa)) are important for cytoskeleton localization. Positions 320–495 (DIQYCKWCNI…LISNSEDDNE (176 aa)) are interaction with host IRF3. The pLxIS motif signature appears at 485-488 (LLIS).

Belongs to the rotavirus NSP1 family. Interacts (via C-terminus) with host IRF3; this interaction leads to IRF3 degradation. Interacts with host IRF7; this interaction leads to IRF7 degradation. Interacts with host CUL1 and CUL3.

The protein resides in the host cytoplasm. It is found in the host cytoskeleton. Its function is as follows. Plays a role in the inhibition of host innate immunity by inducing the degradation of key host factors required to activate interferon production such as IRF3, IRF5 or IRF7. Associates with components of cullin RING ligases (CRLs) including CUL1 or CUL3, which are essential multisubunit ubiquitination complexes, to modulate their activities. The sequence is that of Non-structural protein 1 from Macaca mulatta (Rhesus macaque).